The sequence spans 348 residues: Neuronal growth regulator 1 (348 aa).

An N-terminal signal peptide occupies residues 1–31 (MVLLAQGACCSNQWLAAVLLSLCSCLPAGQS). Ig-like C2-type domains lie at 32-128 (VDFP…VHLT), 133-215 (PKIY…RVIV), and 219-307 (PTIQ…LPLN). A disulfide bond links C54 and C112. N-linked (GlcNAc...) asparagine glycosylation is found at N67 and N149. 2 disulfides stabilise this stretch: C154–C197 and C239–C291. Phosphotyrosine is present on Y181. 4 N-linked (GlcNAc...) asparagine glycosylation sites follow: N269, N280, N288, and N301. Residue G318 is the site of GPI-anchor amidated glycine attachment. The propeptide at 319 to 348 (SACDLFSCWSLALTLSSVISIFYLKNAILQ) is removed in mature form.

It belongs to the immunoglobulin superfamily. IgLON family. In terms of tissue distribution, expressed in brain.

It localises to the cell membrane. Functionally, may be involved in cell-adhesion. May function as a trans-neural growth-promoting factor in regenerative axon sprouting in the mammalian brain. This is Neuronal growth regulator 1 (Negr1) from Mus musculus (Mouse).